Here is a 333-residue protein sequence, read N- to C-terminus: Adenosine deaminase (333 aa).

Zn(2+)-binding residues include His12 and His14. 3 residues coordinate substrate: His14, Asp16, and Gly170. Residue His197 participates in Zn(2+) binding. The active-site Proton donor is Glu200. A Zn(2+)-binding site is contributed by Asp278. Residue Asp279 coordinates substrate.

Belongs to the metallo-dependent hydrolases superfamily. Adenosine and AMP deaminases family. Adenosine deaminase subfamily. Requires Zn(2+) as cofactor.

The enzyme catalyses adenosine + H2O + H(+) = inosine + NH4(+). It catalyses the reaction 2'-deoxyadenosine + H2O + H(+) = 2'-deoxyinosine + NH4(+). Catalyzes the hydrolytic deamination of adenosine and 2-deoxyadenosine. This chain is Adenosine deaminase, found in Photorhabdus laumondii subsp. laumondii (strain DSM 15139 / CIP 105565 / TT01) (Photorhabdus luminescens subsp. laumondii).